A 669-amino-acid polypeptide reads, in one-letter code: MATSEETAAGYVIGVYFHSVHVHCRIIVWQVNFLPLDPNDGETECYFVVDTLTKEAMERMPEIQECVPSITEHARDLAIWELALRLQNQTIVKAVRTASLPVVLIMTVGRIVNDVIPCPNVRTPRPLACAYLHCEATVTFEVPLTGPAASTGTWHSSIYRECAISAIEICLKTSRGIYSCQSNEAPEAKREKRGLDISDVFVCLTYDIPIAGRVLSLLVPHAPAFHVLWINEDSKWNGAAVEFFRALHHKLFSERNGIPPLWLYVFPGAVEEGTAFAPLLPAFPCIPLRYGSPTSLDRASVQWDLFEPHILTHFDGIKRTSLADTVFGYDSLAISRECEDQYVWPTPVTDININLCTDSDTMAIVREPSGLVAVNLEALLRTDSVLSRVSSIVSLDTLLDLSTPECRRSVELRYNSLLSTVLSWSTSRGHKWAAIVKWKLFFLVQALEPEQWSPEFKDLKRACQMAGFTLKGGTSGDLVFSSHANLLFSTSMGYFLHAGSPRSTAGTGGEPNPRHITGPDTEGNGEHRNSPNLCGFVTWLQSLTTCIERALNMPPDTSWLQLIEEVIPLYFHRRRQTSFWLIPLSHCEGIPVCPPLPFDCLAPRLFIVTKSGPMCYRAGFSLPVDVNYLFYLEQTLKAVRQVSPQEHNPQDAKEMTLQLEAWTRLLSLF.

The segment at 502–526 (RSTAGTGGEPNPRHITGPDTEGNGE) is disordered.

This sequence belongs to the herpesviridae HEPA family. As to quaternary structure, associates with the primase and the helicase to form the helicase-primase complex. Interacts with the origin-binding protein. Interacts with the polymerase catalytic subunit.

The protein resides in the host nucleus. Its function is as follows. Component of the helicase/primase complex. Unwinds the DNA at the replication forks and generates single-stranded DNA for both leading and lagging strand synthesis. The primase synthesizes short RNA primers on the lagging strand that the polymerase presumably elongates using dNTPs. The primase-associated factor has no known catalytic activity in the complex and may serve to facilitate the formation of the replisome by directly interacting with the origin-binding protein and the polymerase. The chain is DNA helicase/primase complex-associated protein (ORF40) from Human herpesvirus 8 type P (isolate GK18) (HHV-8).